We begin with the raw amino-acid sequence, 123 residues long: Galanin peptides (123 aa).

An N-terminal signal peptide occupies residues 1–19 (MARGSALLLASLLLAAALS). A propeptide spanning residues 20–30 (ASAGLWSPAKE) is cleaved from the precursor. Positions 46–80 (HAVGNHRSFSDKNGLTSKRELRPEDDMKPGSFDRS) are disordered. Over residues 62-73 (SKRELRPEDDMK) the composition is skewed to basic and acidic residues. A phosphoserine mark is found at S116 and S117.

This sequence belongs to the galanin family.

It is found in the secreted. Endocrine hormone of the central and peripheral nervous systems that binds and activates the G protein-coupled receptors GALR1, GALR2, and GALR3. This small neuropeptide may regulate diverse physiologic functions including contraction of smooth muscle of the gastrointestinal and genitourinary tract, growth hormone and insulin release and adrenal secretion. In Homo sapiens (Human), this protein is Galanin peptides (GAL).